The chain runs to 89 residues: Small ribosomal subunit protein uS15 (89 aa).

The protein belongs to the universal ribosomal protein uS15 family. As to quaternary structure, part of the 30S ribosomal subunit. Forms a bridge to the 50S subunit in the 70S ribosome, contacting the 23S rRNA.

Functionally, one of the primary rRNA binding proteins, it binds directly to 16S rRNA where it helps nucleate assembly of the platform of the 30S subunit by binding and bridging several RNA helices of the 16S rRNA. In terms of biological role, forms an intersubunit bridge (bridge B4) with the 23S rRNA of the 50S subunit in the ribosome. This Staphylococcus aureus (strain JH1) protein is Small ribosomal subunit protein uS15.